Here is a 77-residue protein sequence, read N- to C-terminus: Sec-independent protein translocase protein TatA (77 aa).

The helical transmembrane segment at 1-21 (MGSFSIWHWLIVLVIVMLVFG) threads the bilayer. The disordered stretch occupies residues 46 to 77 (GEGKAAADPAQSKELRDSTTIDVEAKEKTRQQ).

It belongs to the TatA/E family. The Tat system comprises two distinct complexes: a TatABC complex, containing multiple copies of TatA, TatB and TatC subunits, and a separate TatA complex, containing only TatA subunits. Substrates initially bind to the TatABC complex, which probably triggers association of the separate TatA complex to form the active translocon.

The protein localises to the cell inner membrane. Part of the twin-arginine translocation (Tat) system that transports large folded proteins containing a characteristic twin-arginine motif in their signal peptide across membranes. TatA could form the protein-conducting channel of the Tat system. The chain is Sec-independent protein translocase protein TatA from Cupriavidus necator (strain ATCC 17699 / DSM 428 / KCTC 22496 / NCIMB 10442 / H16 / Stanier 337) (Ralstonia eutropha).